We begin with the raw amino-acid sequence, 210 residues long: Putative 3-methyladenine DNA glycosylase (210 aa).

Belongs to the DNA glycosylase MPG family.

The protein is Putative 3-methyladenine DNA glycosylase of Lactobacillus helveticus (strain DPC 4571).